The primary structure comprises 157 residues: Endoribonuclease YbeY (157 aa).

Zn(2+) is bound by residues His116, His120, and His126.

It belongs to the endoribonuclease YbeY family. Requires Zn(2+) as cofactor.

It is found in the cytoplasm. Functionally, single strand-specific metallo-endoribonuclease involved in late-stage 70S ribosome quality control and in maturation of the 3' terminus of the 16S rRNA. This Paenarthrobacter aurescens (strain TC1) protein is Endoribonuclease YbeY.